We begin with the raw amino-acid sequence, 473 residues long: ATP synthase subunit beta 2 (473 aa).

Position 158–165 (158–165 (GGAGVGKT)) interacts with ATP.

Belongs to the ATPase alpha/beta chains family. As to quaternary structure, F-type ATPases have 2 components, CF(1) - the catalytic core - and CF(0) - the membrane proton channel. CF(1) has five subunits: alpha(3), beta(3), gamma(1), delta(1), epsilon(1). CF(0) has three main subunits: a(1), b(2) and c(9-12). The alpha and beta chains form an alternating ring which encloses part of the gamma chain. CF(1) is attached to CF(0) by a central stalk formed by the gamma and epsilon chains, while a peripheral stalk is formed by the delta and b chains.

Its subcellular location is the cell membrane. The enzyme catalyses ATP + H2O + 4 H(+)(in) = ADP + phosphate + 5 H(+)(out). Produces ATP from ADP in the presence of a proton gradient across the membrane. The catalytic sites are hosted primarily by the beta subunits. The polypeptide is ATP synthase subunit beta 2 (Listeria monocytogenes serotype 4b (strain F2365)).